Consider the following 139-residue polypeptide: MLMPKRVKYRKTMRGRMKGNSGRGTSVDFGSFGLKALEPAWITSRQIEAARVAMTRFMKRDGKIWIRIFPDKPVTKKAAETRMGSGKGSPEFWVAVVKPGRIMFEADGVPREVATEAFRLAAQKLPIKTKFIVRPDYEG.

This sequence belongs to the universal ribosomal protein uL16 family. Part of the 50S ribosomal subunit.

Functionally, binds 23S rRNA and is also seen to make contacts with the A and possibly P site tRNAs. The polypeptide is Large ribosomal subunit protein uL16 (Chlorobium phaeobacteroides (strain DSM 266 / SMG 266 / 2430)).